The primary structure comprises 421 residues: Serine--tRNA ligase (421 aa).

229 to 231 (TAE) contributes to the L-serine binding site. 260-262 (RAE) contacts ATP. E283 lines the L-serine pocket. 347–350 (EISS) is a binding site for ATP. Position 383 (S383) interacts with L-serine.

Belongs to the class-II aminoacyl-tRNA synthetase family. Type-1 seryl-tRNA synthetase subfamily. Homodimer. The tRNA molecule binds across the dimer.

It localises to the cytoplasm. The enzyme catalyses tRNA(Ser) + L-serine + ATP = L-seryl-tRNA(Ser) + AMP + diphosphate + H(+). It catalyses the reaction tRNA(Sec) + L-serine + ATP = L-seryl-tRNA(Sec) + AMP + diphosphate + H(+). Its pathway is aminoacyl-tRNA biosynthesis; selenocysteinyl-tRNA(Sec) biosynthesis; L-seryl-tRNA(Sec) from L-serine and tRNA(Sec): step 1/1. Functionally, catalyzes the attachment of serine to tRNA(Ser). Is also able to aminoacylate tRNA(Sec) with serine, to form the misacylated tRNA L-seryl-tRNA(Sec), which will be further converted into selenocysteinyl-tRNA(Sec). This Desulfitobacterium hafniense (strain DSM 10664 / DCB-2) protein is Serine--tRNA ligase.